A 680-amino-acid polypeptide reads, in one-letter code: Trehalase (680 aa).

The segment at 1–27 is disordered; sequence MVLHAQPPDQSTETAREAKALAGATDG.

Belongs to the glycosyl hydrolase 15 family. As to quaternary structure, homomultimer. Requires phosphate as cofactor.

It catalyses the reaction alpha,alpha-trehalose + H2O = alpha-D-glucose + beta-D-glucose. The protein operates within glycan degradation; trehalose degradation; D-glucose from alpha,alpha-trehalose: step 1/1. Its function is as follows. Catalyzes the hydrolysis of alpha,alpha-trehalose into two molecules of D-glucose. This chain is Trehalase, found in Mycobacterium tuberculosis (strain ATCC 25618 / H37Rv).